The following is a 391-amino-acid chain: Phosphoglycerate kinase (391 aa).

Substrate-binding positions include D21 to N23, R36, H59 to R62, R113, and R146. ATP contacts are provided by residues K197, E319, and G345–T348.

This sequence belongs to the phosphoglycerate kinase family. Monomer.

It localises to the cytoplasm. It carries out the reaction (2R)-3-phosphoglycerate + ATP = (2R)-3-phospho-glyceroyl phosphate + ADP. It participates in carbohydrate degradation; glycolysis; pyruvate from D-glyceraldehyde 3-phosphate: step 2/5. The sequence is that of Phosphoglycerate kinase from Colwellia psychrerythraea (strain 34H / ATCC BAA-681) (Vibrio psychroerythus).